Consider the following 362-residue polypeptide: DNA replication and repair protein RecF (362 aa).

Residue 30–37 (GDNAQGKT) coordinates ATP.

The protein belongs to the RecF family.

It is found in the cytoplasm. The RecF protein is involved in DNA metabolism; it is required for DNA replication and normal SOS inducibility. RecF binds preferentially to single-stranded, linear DNA. It also seems to bind ATP. The sequence is that of DNA replication and repair protein RecF from Agathobacter rectalis (strain ATCC 33656 / DSM 3377 / JCM 17463 / KCTC 5835 / VPI 0990) (Eubacterium rectale).